Here is a 163-residue protein sequence, read N- to C-terminus: Nucleotide-binding protein MAV_4575 (163 aa).

Belongs to the YajQ family.

Nucleotide-binding protein. This chain is Nucleotide-binding protein MAV_4575, found in Mycobacterium avium (strain 104).